Here is a 146-residue protein sequence, read N- to C-terminus: MQKTSMLTKEQANKRRQWYIVDAAGLVLGKLAVKAADLIRGKNKVDFTPNQDCGDYLIIINSDQVVLTGNKKENEFWYHHSQYIGGIKKVSGRDMLKKQSDKLVYNAVKGMLPDNRLSRRWITKVHVFKGDKHNMEAQKPTTLNWS.

It belongs to the universal ribosomal protein uL13 family. As to quaternary structure, part of the 50S ribosomal subunit.

Functionally, this protein is one of the early assembly proteins of the 50S ribosomal subunit, although it is not seen to bind rRNA by itself. It is important during the early stages of 50S assembly. The polypeptide is Large ribosomal subunit protein uL13 (Mycoplasma pneumoniae (strain ATCC 29342 / M129 / Subtype 1) (Mycoplasmoides pneumoniae)).